The primary structure comprises 129 residues: Translation initiation factor 5A (129 aa).

Position 36 is a hypusine (Lys-36).

It belongs to the eIF-5A family.

It is found in the cytoplasm. In terms of biological role, functions by promoting the formation of the first peptide bond. The chain is Translation initiation factor 5A (eif5a) from Thermoplasma acidophilum (strain ATCC 25905 / DSM 1728 / JCM 9062 / NBRC 15155 / AMRC-C165).